We begin with the raw amino-acid sequence, 276 residues long: Extracellular metalloprotease VDBG_07883 (276 aa).

The N-terminal stretch at 1–17 is a signal peptide; that stretch reads MQSKFLWIAAASAATAA. 2 N-linked (GlcNAc...) asparagine glycosylation sites follow: N70 and N102. H191 is a Zn(2+) binding site. The active site involves E192. H195 lines the Zn(2+) pocket. N222 carries N-linked (GlcNAc...) asparagine glycosylation. An intrachain disulfide couples C227 to C254.

It belongs to the peptidase M43B family.

The protein resides in the secreted. Functionally, secreted metalloproteinase that allows assimilation of proteinaceous substrates. In Verticillium alfalfae (strain VaMs.102 / ATCC MYA-4576 / FGSC 10136) (Verticillium wilt of alfalfa), this protein is Extracellular metalloprotease VDBG_07883.